The following is a 370-amino-acid chain: UDP-N-acetylglucosamine--N-acetylmuramyl-(pentapeptide) pyrophosphoryl-undecaprenol N-acetylglucosamine transferase (370 aa).

UDP-N-acetyl-alpha-D-glucosamine contacts are provided by residues 15-17 (TGG), Asn129, Arg171, Ser200, Ile256, and Gln301.

The protein belongs to the glycosyltransferase 28 family. MurG subfamily.

The protein localises to the cell membrane. It carries out the reaction di-trans,octa-cis-undecaprenyl diphospho-N-acetyl-alpha-D-muramoyl-L-alanyl-D-glutamyl-meso-2,6-diaminopimeloyl-D-alanyl-D-alanine + UDP-N-acetyl-alpha-D-glucosamine = di-trans,octa-cis-undecaprenyl diphospho-[N-acetyl-alpha-D-glucosaminyl-(1-&gt;4)]-N-acetyl-alpha-D-muramoyl-L-alanyl-D-glutamyl-meso-2,6-diaminopimeloyl-D-alanyl-D-alanine + UDP + H(+). Its pathway is cell wall biogenesis; peptidoglycan biosynthesis. In terms of biological role, cell wall formation. Catalyzes the transfer of a GlcNAc subunit on undecaprenyl-pyrophosphoryl-MurNAc-pentapeptide (lipid intermediate I) to form undecaprenyl-pyrophosphoryl-MurNAc-(pentapeptide)GlcNAc (lipid intermediate II). This chain is UDP-N-acetylglucosamine--N-acetylmuramyl-(pentapeptide) pyrophosphoryl-undecaprenol N-acetylglucosamine transferase, found in Caldicellulosiruptor saccharolyticus (strain ATCC 43494 / DSM 8903 / Tp8T 6331).